A 468-amino-acid polypeptide reads, in one-letter code: Cysteine--tRNA ligase (468 aa).

Cysteine 28 serves as a coordination point for Zn(2+). The short motif at 30-40 (PTVYNYIHIGN) is the 'HIGH' region element. Zn(2+) is bound by residues cysteine 212, histidine 237, and glutamate 241. The 'KMSKS' region motif lies at 271 to 275 (KMSKS). ATP is bound at residue lysine 274.

It belongs to the class-I aminoacyl-tRNA synthetase family. Monomer. The cofactor is Zn(2+).

Its subcellular location is the cytoplasm. It carries out the reaction tRNA(Cys) + L-cysteine + ATP = L-cysteinyl-tRNA(Cys) + AMP + diphosphate. This Latilactobacillus sakei subsp. sakei (strain 23K) (Lactobacillus sakei subsp. sakei) protein is Cysteine--tRNA ligase.